The chain runs to 175 residues: Interferon a3 (175 aa).

Positions 1–23 (MYTMQSWSCIFLIICSMQSVCHC) are cleaved as a signal peptide. A disulfide bridge links Cys-24 with Cys-120.

This sequence belongs to the alpha/beta interferon family. Isoform 1 and isoform 2 are expressed in several tissues, including gill, spleen, intestine, kidney and skin.

It localises to the secreted. The protein resides in the cytoplasm. Its subcellular location is the cytosol. Key player in antiviral response. Induces expression of TLRs, including that of TLR3, TLR9 and TLR8a1, and that of cytosolic pattern recognition receptors, including RIGI, IFIH1/MDA5 and DHX58/LGP2. Also induces MX1 and its own expression. In the presence of intracellular IFNAR2 (iIFNAR2) and IFNAR1B, intracellular isoform 3 may mediate STAT1 and STAT2 phosphorylation and induction of EIF2AK2, MX1 and RSAD2. The sequence is that of Interferon a3 from Oncorhynchus mykiss (Rainbow trout).